The sequence spans 547 residues: MQTSPSSTAPCADKALDDLLKEVDRRRNFAIISHPDAGKTTLTEKLLLYGGAIQEAGAVKARRSQRSATSDWMAMEQQRGISITSTVLQFDYRGKILNLLDTPGHQDFSEDTYRTLAAADNAVMLIDAAKGLETQTRKLFEVCRLRHLPIFTFINKLDRPSLTPLELMDEIEQELGMNTYAVNYPIGTGDRFRGVYNRLTKTIHLFERTGTHGSKKAADQTMALDDPALESLLGSDVYAEFQDELELIEEAGAEFDLAAVHGGEMTPVFFGSAMNNFGVELFLQAFLQYAAKPEAHDSNRGTIEPTYEEFSGFVFKLQANMDPKHRDRIAFLRVCSGKFEKDMVVKHPRTGKTVRLSRPQKLFAQERESVDIAYAGDVIGLNNPGAFTIGDTVHTGEKIIYPPIPSFSPELFAYLRSTDPSQYKNFKKGVSELQEEGAVQILQSLDESKRDPILAAVGQLQFEVVQYRLQEEYGVETRLEPLGFSLARWVVEGWDALEKAGRLFNTVVVKDRWDAPVLLFKNQWNLEQVAGDCLDLKLSAIAIPPSL.

A tr-type G domain is found at 24-294 (DRRRNFAIIS…AFLQYAAKPE (271 aa)). Residues 33-40 (SHPDAGKT), 101-105 (DTPGH), and 155-158 (NKLD) each bind GTP.

This sequence belongs to the TRAFAC class translation factor GTPase superfamily. Classic translation factor GTPase family. PrfC subfamily.

It is found in the cytoplasm. Functionally, increases the formation of ribosomal termination complexes and stimulates activities of RF-1 and RF-2. It binds guanine nucleotides and has strong preference for UGA stop codons. It may interact directly with the ribosome. The stimulation of RF-1 and RF-2 is significantly reduced by GTP and GDP, but not by GMP. The polypeptide is Peptide chain release factor 3 (prfC) (Synechocystis sp. (strain ATCC 27184 / PCC 6803 / Kazusa)).